The sequence spans 435 residues: Methylenetetrahydrofolate--tRNA-(uracil-5-)-methyltransferase TrmFO (435 aa).

10 to 15 (GAGLAG) contributes to the FAD binding site.

This sequence belongs to the MnmG family. TrmFO subfamily. It depends on FAD as a cofactor.

It is found in the cytoplasm. The catalysed reaction is uridine(54) in tRNA + (6R)-5,10-methylene-5,6,7,8-tetrahydrofolate + NADH + H(+) = 5-methyluridine(54) in tRNA + (6S)-5,6,7,8-tetrahydrofolate + NAD(+). It catalyses the reaction uridine(54) in tRNA + (6R)-5,10-methylene-5,6,7,8-tetrahydrofolate + NADPH + H(+) = 5-methyluridine(54) in tRNA + (6S)-5,6,7,8-tetrahydrofolate + NADP(+). In terms of biological role, catalyzes the folate-dependent formation of 5-methyl-uridine at position 54 (M-5-U54) in all tRNAs. This is Methylenetetrahydrofolate--tRNA-(uracil-5-)-methyltransferase TrmFO from Bacillus velezensis (strain DSM 23117 / BGSC 10A6 / LMG 26770 / FZB42) (Bacillus amyloliquefaciens subsp. plantarum).